The sequence spans 282 residues: UDP-3-O-acyl-N-acetylglucosamine deacetylase (282 aa).

Zn(2+) contacts are provided by H81, H239, and D243. Catalysis depends on H266, which acts as the Proton donor.

It belongs to the LpxC family. Zn(2+) is required as a cofactor.

The enzyme catalyses a UDP-3-O-[(3R)-3-hydroxyacyl]-N-acetyl-alpha-D-glucosamine + H2O = a UDP-3-O-[(3R)-3-hydroxyacyl]-alpha-D-glucosamine + acetate. Its pathway is glycolipid biosynthesis; lipid IV(A) biosynthesis; lipid IV(A) from (3R)-3-hydroxytetradecanoyl-[acyl-carrier-protein] and UDP-N-acetyl-alpha-D-glucosamine: step 2/6. Catalyzes the hydrolysis of UDP-3-O-myristoyl-N-acetylglucosamine to form UDP-3-O-myristoylglucosamine and acetate, the committed step in lipid A biosynthesis. The chain is UDP-3-O-acyl-N-acetylglucosamine deacetylase from Chlamydia pneumoniae (Chlamydophila pneumoniae).